A 450-amino-acid polypeptide reads, in one-letter code: FAD-linked oxidoreductase ptmO (450 aa).

Residues P32 to A203 form the FAD-binding PCMH-type domain.

This sequence belongs to the oxygen-dependent FAD-linked oxidoreductase family. FAD is required as a cofactor.

The protein operates within secondary metabolite biosynthesis. Functionally, FAD-linked oxidoreductase; part of the gene cluster that mediates the biosynthesis of the indole diterpenes penitrems. The geranylgeranyl diphosphate (GGPP) synthase ptmG catalyzes the first step in penitrem biosynthesis via conversion of farnesyl pyrophosphate and isopentyl pyrophosphate into geranylgeranyl pyrophosphate (GGPP). Condensation of indole-3-glycerol phosphate with GGPP by the prenyl transferase ptmC then forms 3-geranylgeranylindole (3-GGI). Epoxidation by the FAD-dependent monooxygenase ptmM leads to a epoxidized-GGI that is substrate of the terpene cyclase ptmB for cyclization to yield paspaline. Paspaline is subsequently converted to 13-desoxypaxilline by the cytochrome P450 monooxygenase ptmP, the latter being then converted to paxilline by the cytochrome P450 monooxygenase ptmQ. Paxilline is converted to beta-paxitriol via C-10 ketoreduction by the short-chain dehydrogenase ptmH which can be monoprenylated at the C-20 by the indole diterpene prenyltransferase ptmD. A two-step elimination (acetylation and elimination) process performed by the O-acetyltransferase ptmV and ptmI leads to the production of the prenylated form of penijanthine. The FAD-linked oxidoreductase ptmO then converts the prenylated form of penijanthine into PC-M5 which is in turn transformed into PC-M4 by the aromatic dimethylallyltransferase ptmE. Five sequential oxidative transformations performed by the cytochrome P450 monooxygenases ptmK, ptmU, ptmL, ptmN and ptmJ yield the various penitrem compounds. PtmK, ptmU and ptmM are involved in the formation of the key bicyclic ring of penitrem C via the formation of the intermediates secopenitrem D and penitrem D. PtmL catalyzes the epoxidation of penitrem D and C to yield penitrem B and F, respectively. PtmJ catalyzes the last benzylic hydroxylation to convert penitrem B to prenitrem E and penitrem F to penitrem A. This is FAD-linked oxidoreductase ptmO from Penicillium ochrochloron.